The chain runs to 40 residues: Natriuretic peptide TNPd (40 aa).

Cysteine 9 and cysteine 25 are oxidised to a cystine.

The protein belongs to the natriuretic peptide family. In terms of tissue distribution, expressed by the venom gland.

Its subcellular location is the secreted. Its function is as follows. Snake venom natriuretic peptide that exhibits vasoactive and hypotensive activity. Stimulates cGMP production through the natriuretic peptide receptor 1 (NPR1) with very high potencies for the rat NPR1 (EC(50)=18 nM), and very weak potencies over human NPR1 (30% activation at 10 uM). In Oxyuranus microlepidotus (Inland taipan), this protein is Natriuretic peptide TNPd.